Here is a 123-residue protein sequence, read N- to C-terminus: Large ribosomal subunit protein bL12 (123 aa).

This sequence belongs to the bacterial ribosomal protein bL12 family. Homodimer. Part of the ribosomal stalk of the 50S ribosomal subunit. Forms a multimeric L10(L12)X complex, where L10 forms an elongated spine to which 2 to 4 L12 dimers bind in a sequential fashion. Binds GTP-bound translation factors.

In terms of biological role, forms part of the ribosomal stalk which helps the ribosome interact with GTP-bound translation factors. Is thus essential for accurate translation. The polypeptide is Large ribosomal subunit protein bL12 (Finegoldia magna (strain ATCC 29328 / DSM 20472 / WAL 2508) (Peptostreptococcus magnus)).